A 379-amino-acid chain; its full sequence is Homoserine O-acetyltransferase (379 aa).

The AB hydrolase-1 domain maps to 54-332; sequence NAILVCHALS…PYQSEEIVKS (279 aa). Ser159 functions as the Nucleophile in the catalytic mechanism. Position 228 (Arg228) interacts with substrate. Residues Asp318 and His352 contribute to the active site. A substrate-binding site is contributed by Asp353.

It belongs to the AB hydrolase superfamily. MetX family. In terms of assembly, homodimer.

It is found in the cytoplasm. The catalysed reaction is L-homoserine + acetyl-CoA = O-acetyl-L-homoserine + CoA. It functions in the pathway amino-acid biosynthesis; L-methionine biosynthesis via de novo pathway; O-acetyl-L-homoserine from L-homoserine: step 1/1. Functionally, transfers an acetyl group from acetyl-CoA to L-homoserine, forming acetyl-L-homoserine. The chain is Homoserine O-acetyltransferase from Leptospira meyeri.